A 492-amino-acid polypeptide reads, in one-letter code: BTB/POZ domain and ankyrin repeat-containing protein NOOT2 (492 aa).

One can recognise a BTB domain in the interval 25–107 (SDVTFQVEGR…LYSGQVSIVP (83 aa)). The C2HC NPR-type zinc-finger motif lies at 113–127 (RPNCGERGCWHTHCT). Residues C116, C121, H123, and C126 each coordinate Zn(2+). ANK repeat units lie at residues 248–277 (QKIR…LNLD), 278–307 (EALA…DVNY), 312–341 (AGKT…DPTV), and 345–379 (DGVT…KLRL). 2 disordered regions span residues 395–439 (ENNA…NSIG) and 455–492 (TQMG…SHDF). Low complexity-rich tracts occupy residues 397–413 (NASN…SSAA) and 425–439 (SSSS…NSIG). Positions 461 to 473 (DDNRHNNSHREAM) are enriched in basic and acidic residues.

Belongs to the plant 'ANKYRIN-BTB/POZ' family. 'NOOT-BOP-COCH-like' (NBCL) subfamily. As to quaternary structure, homodimer.

The protein resides in the nucleus. Its subcellular location is the cytoplasm. It is found in the cell membrane. Its pathway is protein modification; protein ubiquitination. Its function is as follows. May act as a substrate-specific adapter of an E3 ubiquitin-protein ligase complex (CUL3-RBX1-BTB) which mediates the ubiquitination and subsequent proteasomal degradation of target proteins. Transcriptional co-regulator involved in the promotion of leaf and floral meristem fate and determinacy. Required for the abscission of senescent organs, probably by regulating the cell wall disorganization in abscission zones (AZs, e.g. pulvini at the base of leaves). Involved in the coordination of the symbiotic nodule developmental program; promotes the formation of root nodules by interacting directly with APP1 to modulate the expression of the nuclear transcription factor Y subunit (NF-YA1), a key nodulin. Involved in the regulation of indeterminate nodule identity in association with NOOT1. This chain is BTB/POZ domain and ankyrin repeat-containing protein NOOT2, found in Medicago truncatula (Barrel medic).